A 275-amino-acid chain; its full sequence is Ribosomal protein L11 methyltransferase (275 aa).

Residues Thr130, Gly151, Asp172, and Asn213 each coordinate S-adenosyl-L-methionine.

Belongs to the methyltransferase superfamily. PrmA family.

Its subcellular location is the cytoplasm. It catalyses the reaction L-lysyl-[protein] + 3 S-adenosyl-L-methionine = N(6),N(6),N(6)-trimethyl-L-lysyl-[protein] + 3 S-adenosyl-L-homocysteine + 3 H(+). Methylates ribosomal protein L11. The protein is Ribosomal protein L11 methyltransferase of Wolinella succinogenes (strain ATCC 29543 / DSM 1740 / CCUG 13145 / JCM 31913 / LMG 7466 / NCTC 11488 / FDC 602W) (Vibrio succinogenes).